Consider the following 573-residue polypeptide: Arylsulfatase I (573 aa).

The signal sequence occupies residues 1-23 (MHALSGFSLVSLLSLGYLSWDWA). Ca(2+)-binding residues include D55, D56, and C93. The active-site Nucleophile is C93. The residue at position 93 (C93) is a 3-oxoalanine (Cys). K147 contributes to the substrate binding site. Residue H149 is part of the active site. H239 contributes to the substrate binding site. N-linked (GlcNAc...) asparagine glycosylation is found at N276 and N288. Residues D297 and N298 each coordinate Ca(2+). K315 is a binding site for substrate. N466 and N496 each carry an N-linked (GlcNAc...) asparagine glycan. Positions 506-550 (AANPRAHPDFNGGAWGPWASDEDEEEEDEEEEGRARSFPRGRRKK) are disordered. Residues 525-537 (SDEDEEEEDEEEE) show a composition bias toward acidic residues.

It belongs to the sulfatase family. Ca(2+) serves as cofactor. In terms of processing, the oxidation of Cys-93 residue to 3-oxoalanine (also known as C(alpha)-formylglycine) by SUMF1/Sulfatase-modifying factor 1, seems critical for catalytic activity.

It is found in the secreted. The protein resides in the endoplasmic reticulum. Displays arylsulfatase activity at neutral pH, when co-expressed with SUMF1; arylsulfatase activity is measured in the secretion medium of retinal cell line, but no activity is recorded when measured in cell extracts. In Rattus norvegicus (Rat), this protein is Arylsulfatase I (Arsi).